Reading from the N-terminus, the 164-residue chain is Proline-rich protein 2 (164 aa).

Residues 1–21 form the signal peptide; the sequence is MNLKVGIAVLIIALIVPSAQP.

In terms of tissue distribution, component of the acid-soluble organic matrix of calcified layers of the shell (at protein level).

Its subcellular location is the secreted. This Lottia gigantea (Giant owl limpet) protein is Proline-rich protein 2.